Here is a 505-residue protein sequence, read N- to C-terminus: Maturase K (505 aa).

This sequence belongs to the intron maturase 2 family. MatK subfamily.

The protein localises to the plastid. The protein resides in the chloroplast. Usually encoded in the trnK tRNA gene intron. Probably assists in splicing its own and other chloroplast group II introns. The chain is Maturase K from Spinacia oleracea (Spinach).